We begin with the raw amino-acid sequence, 481 residues long: tRNA-2-methylthio-N(6)-dimethylallyladenosine synthase (481 aa).

The MTTase N-terminal domain maps to 24-140; sequence RKLFIESYGC…LPNLINEVEE (117 aa). Residues cysteine 33, cysteine 69, cysteine 103, cysteine 178, cysteine 182, and cysteine 185 each contribute to the [4Fe-4S] cluster site. In terms of domain architecture, Radical SAM core spans 164–410; the sequence is QSNGVSAFVS…VDLQQKHSKQ (247 aa). Residues 413–476 enclose the TRAM domain; that stretch reads NSVIGTTVEV…SATLIGEPIG (64 aa).

This sequence belongs to the methylthiotransferase family. MiaB subfamily. In terms of assembly, monomer. [4Fe-4S] cluster is required as a cofactor.

Its subcellular location is the cytoplasm. The enzyme catalyses N(6)-dimethylallyladenosine(37) in tRNA + (sulfur carrier)-SH + AH2 + 2 S-adenosyl-L-methionine = 2-methylsulfanyl-N(6)-dimethylallyladenosine(37) in tRNA + (sulfur carrier)-H + 5'-deoxyadenosine + L-methionine + A + S-adenosyl-L-homocysteine + 2 H(+). In terms of biological role, catalyzes the methylthiolation of N6-(dimethylallyl)adenosine (i(6)A), leading to the formation of 2-methylthio-N6-(dimethylallyl)adenosine (ms(2)i(6)A) at position 37 in tRNAs that read codons beginning with uridine. This is tRNA-2-methylthio-N(6)-dimethylallyladenosine synthase from Christiangramia forsetii (strain DSM 17595 / CGMCC 1.15422 / KT0803) (Gramella forsetii).